The following is a 310-amino-acid chain: Malate dehydrogenase (310 aa).

Residues 7-12 (GAGNVG) and Asp-32 each bind NAD(+). Substrate contacts are provided by Arg-81 and Arg-87. Residues Asn-94 and 117-119 (VSN) each bind NAD(+). 2 residues coordinate substrate: Asn-119 and Arg-150. The active-site Proton acceptor is His-174.

It belongs to the LDH/MDH superfamily. MDH type 3 family. In terms of assembly, homotetramer; arranged as a dimer of dimers.

It catalyses the reaction (S)-malate + NAD(+) = oxaloacetate + NADH + H(+). Catalyzes the reversible oxidation of malate to oxaloacetate. The sequence is that of Malate dehydrogenase from Chlorobaculum parvum (strain DSM 263 / NCIMB 8327) (Chlorobium vibrioforme subsp. thiosulfatophilum).